Here is a 267-residue protein sequence, read N- to C-terminus: MATKLISPPLSCPWVTSREVIIKGLPRRRREWMVTKRNRVSAVTAMIVEPLSVVSSSAIQIHQWWEQNPNSLLLMTEATGGYSLASYYTSLGLFVISVPGLWSLIKRSVKSKIVRKTFVVNDVKKEPKQVAGEILSFFTRKNFNITDRGETITFEGKMVPSRGQAALLTFCTCISLASVGLVLTITVPDFGNNWFFIILLSPLAGVYYWKKASRKEEIKVKMMVGSKGRLDEIVVQGDDVQVEEMRKELQLNEKGMVYVKGLFERSS.

Residues 1–44 (MATKLISPPLSCPWVTSREVIIKGLPRRRREWMVTKRNRVSAVT) constitute a chloroplast transit peptide. Over 45–84 (AMIVEPLSVVSSSAIQIHQWWEQNPNSLLLMTEATGGYSL) the chain is Lumenal. A helical membrane pass occupies residues 85–105 (ASYYTSLGLFVISVPGLWSLI). Residues 106-164 (KRSVKSKIVRKTFVVNDVKKEPKQVAGEILSFFTRKNFNITDRGETITFEGKMVPSRGQ) are Stromal-facing. Residues 165–185 (AALLTFCTCISLASVGLVLTI) traverse the membrane as a helical segment. Thr186 is a topological domain (lumenal). A helical membrane pass occupies residues 187-207 (VPDFGNNWFFIILLSPLAGVY). At 208–267 (YWKKASRKEEIKVKMMVGSKGRLDEIVVQGDDVQVEEMRKELQLNEKGMVYVKGLFERSS) the chain is on the stromal side.

Its subcellular location is the plastid. It is found in the chloroplast thylakoid membrane. Its function is as follows. Required for the biogenesis and accumulation of native cytochrome b6 in the thylakoid membrane. Controls the conversion of apocytochrome b6 to holocytochrome b6. Required for covalent binding of the c-type heme to cytochrome b6. This Arabidopsis thaliana (Mouse-ear cress) protein is Protein COFACTOR ASSEMBLY OF COMPLEX C SUBUNIT B CCB1, chloroplastic.